A 103-amino-acid polypeptide reads, in one-letter code: Ghrelin (103 aa).

A signal peptide spans 1–26 (MPLRRRASHMFVLLCALSLCVESVKG). The segment at 27–51 (GTSFLSPAQKPQGRRPPRMGRRDVA) is disordered. The O-decanoyl serine; alternate moiety is linked to residue Ser29. Ser29 carries the O-hexanoyl serine; alternate lipid modification. The O-octanoyl serine; alternate moiety is linked to residue Ser29. Gln38 carries the glutamine amide modification. A Methionine amide modification is found at Met45. The propeptide at 49 to 103 (DVAEPEIPVIKEDDQFMMSAPFELSVSLSEAEYEKYGPVLQKVLVNLLGDSPLEF) is removed in mature form.

It belongs to the motilin family. In terms of processing, O-octanoylated by GOAT/MBOAT4. O-octanoylation or O-decanoylation is essential for activity. The O-decanoylated form differs in the length of the carbon backbone of the carboxylic acid forming an ester bond with Ser-29. As to expression, expressed in the telencephalon, hypothalamus, pituitary, intestine, liver, spleen and gill, with expression strongest in the intestine.

It localises to the secreted. Its function is as follows. Ligand for growth hormone secretagogue receptor type 1 (GHSR). Induces the release of growth hormone from the pituitary. Induces adiposity and stimulates gastric acid secretion. Involved in growth regulation. Has an appetite-stimulating effect. The polypeptide is Ghrelin (ghrl) (Carassius auratus (Goldfish)).